An 80-amino-acid polypeptide reads, in one-letter code: uncharacterized protein (80 aa).

Transmembrane regions (helical) follow at residues 2-22, 32-52, and 55-75; these read INLWMFLALCIVCVSGYIGQV, FFGMVILAALIYYFTMWLTGG, and LVTGIFMFLAPACGLMIRFMV.

Its subcellular location is the cell membrane. This is an uncharacterized protein from Escherichia coli (strain K12).